The following is a 447-amino-acid chain: Cysteine--tRNA ligase (447 aa).

Cys28 lines the Zn(2+) pocket. Residues 30–40 (PTVYNYIHIGN) carry the 'HIGH' region motif. Zn(2+) is bound by residues Cys211, His236, and Glu240. The 'KMSKS' region motif lies at 268 to 272 (KMSKS). Lys271 is a binding site for ATP.

Belongs to the class-I aminoacyl-tRNA synthetase family. As to quaternary structure, monomer. Zn(2+) is required as a cofactor.

Its subcellular location is the cytoplasm. The catalysed reaction is tRNA(Cys) + L-cysteine + ATP = L-cysteinyl-tRNA(Cys) + AMP + diphosphate. The protein is Cysteine--tRNA ligase of Streptococcus pyogenes serotype M18 (strain MGAS8232).